The primary structure comprises 251 residues: Retinoic acid early-inducible protein 1-epsilon (251 aa).

The first 28 residues, 1–28 (MAKAAVTKRHHFMIQKLLILLSYGYTNG), serve as a signal peptide directing secretion. A disulfide bridge links cysteine 37 with cysteine 56. Residues asparagine 38, asparagine 70, asparagine 83, asparagine 141, and asparagine 154 are each glycosylated (N-linked (GlcNAc...) asparagine). The cysteines at positions 88 and 188 are disulfide-linked. The tract at residues 196 to 228 (LKQSKEKPRSTSRSPSITQLTSTSPLPPPSHST) is disordered. Residues 209 to 219 (SPSITQLTSTS) are compositionally biased toward low complexity. Residue serine 225 is the site of GPI-anchor amidated serine attachment. A propeptide spans 226-251 (HSTSKKGFISVGLIFISLLFAFAFAM) (removed in mature form).

It belongs to the NKG2D ligand family. Post-translationally, glycosylated.

It localises to the cell membrane. Acts as a ligand for KLRK1. This Mus musculus (Mouse) protein is Retinoic acid early-inducible protein 1-epsilon (Raet1e).